The primary structure comprises 314 residues: Olfactory receptor 5P51 (314 aa).

Residues 1–28 (MAFLEDGNHTAVTEFVLFGLTDDPVLRV) are Extracellular-facing. An N-linked (GlcNAc...) asparagine glycan is attached at Asn-8. A helical transmembrane segment spans residues 29-49 (ILFIIFLCIYLVNVSGNLSTI). The Cytoplasmic segment spans residues 50–57 (LLIRVSSQ). Residues 58-78 (LHHPMYFFLSHLASVDVGYSS) form a helical membrane-spanning segment. Residues 79–102 (TVTPKMLANFLLERSTISYLGCTI) lie on the Extracellular side of the membrane. The cysteines at positions 100 and 192 are disulfide-linked. A helical membrane pass occupies residues 103–123 (QLFSGAFVGTLECFLLATMAY). The Cytoplasmic portion of the chain corresponds to 124-136 (DRFIAICNPLLYS). The helical transmembrane segment at 137–157 (TKMSTQVCIQLLVGSYIGGFL) threads the bilayer. Over 158 to 199 (NASSFLLSFFPLLFCGPNRVNHYSCDLTPLIELSCSGSNVPI) the chain is Extracellular. The chain crosses the membrane as a helical span at residues 200–220 (VPASFCSAFVIIVTVSVIAIS). Residues 221-240 (YTYILITILKMRSTEGRQKA) are Cytoplasmic-facing. Residues 241–261 (FSTCTSHLTAVTLYYGTVTFI) traverse the membrane as a helical segment. Topologically, residues 262–274 (YVMPKSSYSTDQN) are extracellular. The helical transmembrane segment at 275–295 (KVVSVFYTVVIPMLNPIIYSL) threads the bilayer. Over 296-314 (RNNEIKGALKRQLARKIFS) the chain is Cytoplasmic.

The protein belongs to the G-protein coupled receptor 1 family.

The protein resides in the cell membrane. Its function is as follows. Potential odorant receptor. In Mus musculus (Mouse), this protein is Olfactory receptor 5P51.